Consider the following 535-residue polypeptide: Ribonuclease Y (535 aa).

The helical transmembrane segment at I4–I24 threads the bilayer. Residues E118–I141 form a disordered region. The KH domain maps to T225–L285. One can recognise an HD domain in the interval V351–A444.

This sequence belongs to the RNase Y family.

Its subcellular location is the cell membrane. Functionally, endoribonuclease that initiates mRNA decay. This is Ribonuclease Y from Streptococcus pyogenes serotype M2 (strain MGAS10270).